The primary structure comprises 331 residues: Ketol-acid reductoisomerase (NADP(+)) (331 aa).

One can recognise a KARI N-terminal Rossmann domain in the interval 2–182; sequence ARMYYDADAN…GGTRAGILET (181 aa). NADP(+)-binding positions include 25-28, Ser-51, Ser-53, and 83-86; these read YGSQ and DEVQ. His-108 is a catalytic residue. Residue Gly-134 coordinates NADP(+). Positions 183–328 constitute a KARI C-terminal knotted domain; it reads SFREETETDL…KDLRAMFSWL (146 aa). Asp-191, Glu-195, Glu-227, and Glu-231 together coordinate Mg(2+). Ser-252 serves as a coordination point for substrate.

This sequence belongs to the ketol-acid reductoisomerase family. The cofactor is Mg(2+).

The catalysed reaction is (2R)-2,3-dihydroxy-3-methylbutanoate + NADP(+) = (2S)-2-acetolactate + NADPH + H(+). The enzyme catalyses (2R,3R)-2,3-dihydroxy-3-methylpentanoate + NADP(+) = (S)-2-ethyl-2-hydroxy-3-oxobutanoate + NADPH + H(+). The protein operates within amino-acid biosynthesis; L-isoleucine biosynthesis; L-isoleucine from 2-oxobutanoate: step 2/4. It functions in the pathway amino-acid biosynthesis; L-valine biosynthesis; L-valine from pyruvate: step 2/4. Its function is as follows. Involved in the biosynthesis of branched-chain amino acids (BCAA). Catalyzes an alkyl-migration followed by a ketol-acid reduction of (S)-2-acetolactate (S2AL) to yield (R)-2,3-dihydroxy-isovalerate. In the isomerase reaction, S2AL is rearranged via a Mg-dependent methyl migration to produce 3-hydroxy-3-methyl-2-ketobutyrate (HMKB). In the reductase reaction, this 2-ketoacid undergoes a metal-dependent reduction by NADPH to yield (R)-2,3-dihydroxy-isovalerate. The protein is Ketol-acid reductoisomerase (NADP(+)) of Crocosphaera subtropica (strain ATCC 51142 / BH68) (Cyanothece sp. (strain ATCC 51142)).